A 474-amino-acid chain; its full sequence is Iroquois-class homeodomain protein irx-5 (474 aa).

A DNA-binding region (homeobox; TALE-type) is located at residues 109–171; that stretch reads DPAYRKNASR…NARRRLKKEN (63 aa). Disordered regions lie at residues 174-222, 252-294, and 453-474; these read TWTP…SPDG, ERNG…IQQL, and SQSQDDLNKGTPYEMKKGMSSI. The segment covering 182 to 199 has biased composition (acidic residues); sequence EDEDDDENIDLEKNEEDD. Residues 263-273 are compositionally biased toward pro residues; sequence PPTPPLCPPDQ.

It belongs to the TALE/IRO homeobox family. In terms of tissue distribution, early in gastrulation, expressed in cells beneath the blastopore lip. Subsequently expressed in the neural plate in overlapping patterns with other irx members, which all share an anterior border of expression. At the time of neural tube closure (stage 19) in regions of the midbrain, hindbrain, neural tube and optic vesicle, where expression continues during tailbud stages. In stage 34, expressed throughout the eye retina. Does not appear to be expressed in the developing heart or pronephros.

The protein localises to the nucleus. Functionally, acts partially redundantly with other irx members in neural patterning. Required for formation of the posterior forebrain, midbrain, hindbrain, and to a lesser extent, spinal cord. Patterns the neuroectoderm in both the anterior/posterior and dorsal/ventral axes. Does not appear to play a role in pronephros kidney development. Involved in craniofacial and gonadal development. Modulates the migration of progenitor cell populations in branchial arches and gonads by repressing CXCL12. The polypeptide is Iroquois-class homeodomain protein irx-5 (irx5) (Xenopus laevis (African clawed frog)).